The sequence spans 352 residues: Anthranilate phosphoribosyltransferase (352 aa).

5-phospho-alpha-D-ribose 1-diphosphate is bound by residues glycine 83, 86–87, threonine 91, 93–96, 111–119, and alanine 123; these read GD, NIST, and KHGGRSVSS. Glycine 83 provides a ligand contact to anthranilate. Serine 95 is a binding site for Mg(2+). Arginine 169 is an anthranilate binding site. Aspartate 228 and glutamate 229 together coordinate Mg(2+).

This sequence belongs to the anthranilate phosphoribosyltransferase family. In terms of assembly, homodimer. Mg(2+) is required as a cofactor.

The enzyme catalyses N-(5-phospho-beta-D-ribosyl)anthranilate + diphosphate = 5-phospho-alpha-D-ribose 1-diphosphate + anthranilate. The protein operates within amino-acid biosynthesis; L-tryptophan biosynthesis; L-tryptophan from chorismate: step 2/5. Catalyzes the transfer of the phosphoribosyl group of 5-phosphorylribose-1-pyrophosphate (PRPP) to anthranilate to yield N-(5'-phosphoribosyl)-anthranilate (PRA). This Neisseria meningitidis serogroup C (strain 053442) protein is Anthranilate phosphoribosyltransferase.